Reading from the N-terminus, the 333-residue chain is Protein translocase subunit SecF (333 aa).

6 helical membrane-spanning segments follow: residues 27-47, 152-172, 180-200, 207-227, 253-275, and 285-307; these read AIVM…NFGI, VWTA…YIWV, LGAV…FAVL, TTVA…VVVF, TLSR…LIWG, and AMVW…IVLF.

This sequence belongs to the SecD/SecF family. SecF subfamily. As to quaternary structure, forms a complex with SecD. Part of the essential Sec protein translocation apparatus which comprises SecA, SecYEG and auxiliary proteins SecDF-YajC and YidC.

The protein resides in the cell inner membrane. In terms of biological role, part of the Sec protein translocase complex. Interacts with the SecYEG preprotein conducting channel. SecDF uses the proton motive force (PMF) to complete protein translocation after the ATP-dependent function of SecA. In Rhodobacter capsulatus (strain ATCC BAA-309 / NBRC 16581 / SB1003), this protein is Protein translocase subunit SecF.